We begin with the raw amino-acid sequence, 89 residues long: Small ribosomal subunit protein uS15 (89 aa).

Belongs to the universal ribosomal protein uS15 family. In terms of assembly, part of the 30S ribosomal subunit. Forms a bridge to the 50S subunit in the 70S ribosome, contacting the 23S rRNA.

In terms of biological role, one of the primary rRNA binding proteins, it binds directly to 16S rRNA where it helps nucleate assembly of the platform of the 30S subunit by binding and bridging several RNA helices of the 16S rRNA. Its function is as follows. Forms an intersubunit bridge (bridge B4) with the 23S rRNA of the 50S subunit in the ribosome. This Geobacillus kaustophilus (strain HTA426) protein is Small ribosomal subunit protein uS15.